Reading from the N-terminus, the 429-residue chain is Saccharopine dehydrogenase-like oxidoreductase (429 aa).

An N-acetylalanine modification is found at alanine 2. Serine 217 carries the post-translational modification Phosphoserine.

Belongs to the saccharopine dehydrogenase family.

The polypeptide is Saccharopine dehydrogenase-like oxidoreductase (SCCPDH) (Homo sapiens (Human)).